The primary structure comprises 557 residues: Small ribosomal subunit protein bS1 (557 aa).

4 S1 motif domains span residues 21 to 87 (GSIV…LSRE), 105 to 171 (AETV…VSRR), 192 to 260 (GMEV…LGLK), and 277 to 347 (GTKL…LGLK). N6-acetyllysine is present on residues Lys-229, Lys-279, and Lys-363. S1 motif domains are found at residues 364–434 (GDRV…LGVK) and 451–520 (GAIV…LSVR).

It belongs to the bacterial ribosomal protein bS1 family. As to quaternary structure, part of the 30S ribosomal subunit. Some nascent polypeptide chains are able to cross-link to this protein in situ. Can be cross-linked to mRNA in the ribosome. Post-translationally, phosphorylated; probably on a serine.

Its function is as follows. Required for translation of most natural mRNAs except for leaderless mRNA. Binds mRNA upstream of the Shine-Dalgarno (SD) sequence and helps it bind to the 30S ribosomal subunit; acts as an RNA chaperone to unfold structured mRNA on the ribosome but is not essential for mRNAs with strong SDs and little 5'-UTR structure, thus it may help fine-tune which mRNAs that are translated. Unwinds dsRNA by binding to transiently formed ssRNA regions; binds about 10 nucleotides. Has a preference for polypyrimidine tracts. Negatively autoregulates its own translation. The sequence is that of Small ribosomal subunit protein bS1 (rpsA) from Escherichia coli O157:H7.